A 228-amino-acid chain; its full sequence is Urease accessory protein UreH (228 aa).

5 helical membrane passes run 48-68 (VFWG…IILM), 79-99 (SLEF…ILSL), 130-150 (LFIG…LTMS), 162-182 (ILFF…LIGI), and 196-216 (AFIQ…MYNL).

It belongs to the NiCoT transporter (TC 2.A.52) family.

Its subcellular location is the cell membrane. Probably facilitates nickel incorporation. May constitute a multicomponent high-affinity nickel transporter. Not essential for the expression of catalytically active urease. In Bacillus sp. (strain TB-90), this protein is Urease accessory protein UreH (ureH).